The primary structure comprises 122 residues: Large ribosomal subunit protein uL14 (122 aa).

Belongs to the universal ribosomal protein uL14 family. In terms of assembly, part of the 50S ribosomal subunit. Forms a cluster with proteins L3 and L19. In the 70S ribosome, L14 and L19 interact and together make contacts with the 16S rRNA in bridges B5 and B8.

Its function is as follows. Binds to 23S rRNA. Forms part of two intersubunit bridges in the 70S ribosome. This is Large ribosomal subunit protein uL14 from Flavobacterium psychrophilum (strain ATCC 49511 / DSM 21280 / CIP 103535 / JIP02/86).